Reading from the N-terminus, the 637-residue chain is Limonene synthase, chloroplastic (637 aa).

The N-terminal 56 residues, 1 to 56 (MALLSIVSLQVPKSCGLKSLISSSNVQKALCISTAVPTLRMRRRQKALVINMKLTT), are a transit peptide targeting the chloroplast. 3 residues coordinate Mg(2+): aspartate 388, aspartate 392, and aspartate 540. The short motif at 388–392 (DDIYD) is the DDXXD motif element.

Belongs to the terpene synthase family. Tpsd subfamily. The cofactor is Mg(2+). Mn(2+) is required as a cofactor. K(+) serves as cofactor.

Its subcellular location is the plastid. It is found in the chloroplast. The catalysed reaction is (2E)-geranyl diphosphate = (4S)-limonene + diphosphate. The protein operates within terpene metabolism; oleoresin biosynthesis. Functionally, involved in defensive oleoresin formation in conifers in response to insect attack or other injury. Involved in monoterpene (C10) olefins biosynthesis. In Abies grandis (Grand fir), this protein is Limonene synthase, chloroplastic (ag10).